The following is a 91-amino-acid chain: Acylphosphatase (91 aa).

The 86-residue stretch at 6–91 (CMRCYISGRV…WEDYISFDVL (86 aa)) folds into the Acylphosphatase-like domain. Residues R21 and N39 contribute to the active site.

This sequence belongs to the acylphosphatase family.

The enzyme catalyses an acyl phosphate + H2O = a carboxylate + phosphate + H(+). In Legionella pneumophila (strain Corby), this protein is Acylphosphatase (acyP).